A 472-amino-acid chain; its full sequence is UDP-N-acetylmuramate--L-alanine ligase (472 aa).

Position 122–128 (122–128) interacts with ATP; sequence GSHGKTT.

Belongs to the MurCDEF family.

It localises to the cytoplasm. The enzyme catalyses UDP-N-acetyl-alpha-D-muramate + L-alanine + ATP = UDP-N-acetyl-alpha-D-muramoyl-L-alanine + ADP + phosphate + H(+). The protein operates within cell wall biogenesis; peptidoglycan biosynthesis. Functionally, cell wall formation. This Prochlorococcus marinus (strain SARG / CCMP1375 / SS120) protein is UDP-N-acetylmuramate--L-alanine ligase.